Here is a 566-residue protein sequence, read N- to C-terminus: MDIKRTILIVALAIVSYVMVLKWNQDYGQAALPTQNVASSTTAPGLPDAPTGTSAANDDIPRAASDTTAPAEAPVAASKDLIQIKTDVLDLAVDPQGGDIAQLRLPLYPRRQDHPEIPFQLFDNGNERTYLAQSGLIGSNGPDASPAGRPIYSAEKKSYQLADGQDQLVVDLKFSKDGVNYIKRFTLKRGLYDITVSYLIDNESAQPWTGAMFAQLKRDASSDPSSSTATGTATYLGAALWTSSEPYKKVSMKDMDKVNEDKSKAPITENVQGGWVAWLQHYFVTAWIPPKGENNQVLARKDSKGNYIIGYTGPSMTVAPGAKAETSAILYAGPKSQAVLKELSPGLELTVDYGFLWFIAQPIFWLLQHIHSLVGNWGWSIIFLTMLIKGIFFPLSAASYKSMARMRAVAPKLAALKEKFGDDRQKMSQAMMELYKKEKINPLGGCLPILVQMPVFLSLYWVLLESVEMRQAPFMLWITDLSIKDPFFILPIIMGATMFIQQQLNPTPPDPMQAKVMKMMPIIFTFFFLWFPAGLVLYWVVNNCLSIAQQWYITRKIEAATKKAAA.

Residues 7–27 traverse the membrane as a helical segment; it reads ILIVALAIVSYVMVLKWNQDY. The disordered stretch occupies residues 38–72; sequence ASSTTAPGLPDAPTGTSAANDDIPRAASDTTAPAE. A run of 5 helical transmembrane segments spans residues 347-367, 373-393, 443-463, 474-494, and 521-541; these read LELT…FWLL, LVGN…GIFF, LGGC…YWVL, FMLW…PIIM, and PIIF…YWVV.

This sequence belongs to the OXA1/ALB3/YidC family. Type 1 subfamily. Interacts with the Sec translocase complex via SecD. Specifically interacts with transmembrane segments of nascent integral membrane proteins during membrane integration.

The protein resides in the cell inner membrane. In terms of biological role, required for the insertion and/or proper folding and/or complex formation of integral membrane proteins into the membrane. Involved in integration of membrane proteins that insert both dependently and independently of the Sec translocase complex, as well as at least some lipoproteins. Aids folding of multispanning membrane proteins. The protein is Membrane protein insertase YidC of Pseudomonas fluorescens (strain ATCC BAA-477 / NRRL B-23932 / Pf-5).